The sequence spans 949 residues: Syndetin (949 aa).

A disordered region spans residues 1–28 (MQKIKSLMTRQGLRSPQESVHDLSPIEN). Over residues 8–18 (MTRQGLRSPQE) the composition is skewed to polar residues. Coiled coils occupy residues 82-104 (SLQE…LERV) and 198-226 (YSCI…LSKI). Residues 509–581 (FEIQADSKDD…ETLRSRKKSD (73 aa)) form a disordered region. The segment covering 569-581 (VSRETLRSRKKSD) has biased composition (basic and acidic residues).

It belongs to the syndetin family. As to quaternary structure, component of the endosome-associated retrograde protein (EARP) complex.

Its subcellular location is the recycling endosome. It is found in the membrane. Functionally, acts as a component of the EARP complex that is involved in endocytic recycling. The EARP complex associates with Rab4-positive endosomes and promotes recycling of internalized transferrin receptor (TFRC) to the plasma membrane. In Gallus gallus (Chicken), this protein is Syndetin.